The primary structure comprises 413 residues: Coiled-coil domain-containing protein 83 (413 aa).

Residues M1–K21 are disordered. The span at N8–K21 shows a compositional bias: basic and acidic residues. 2 coiled-coil regions span residues E37–I184 and W216–C256.

The protein is Coiled-coil domain-containing protein 83 (CCDC83) of Homo sapiens (Human).